Here is a 201-residue protein sequence, read N- to C-terminus: Ribosome maturation factor RimP (201 aa).

Belongs to the RimP family.

Its subcellular location is the cytoplasm. Functionally, required for maturation of 30S ribosomal subunits. In Rhizobium johnstonii (strain DSM 114642 / LMG 32736 / 3841) (Rhizobium leguminosarum bv. viciae), this protein is Ribosome maturation factor RimP.